The primary structure comprises 443 residues: ATP-dependent protease ATPase subunit HslU (443 aa).

ATP-binding positions include Ile18, 60–65 (GVGKTE), Asp256, Glu321, and Arg393.

Belongs to the ClpX chaperone family. HslU subfamily. In terms of assembly, a double ring-shaped homohexamer of HslV is capped on each side by a ring-shaped HslU homohexamer. The assembly of the HslU/HslV complex is dependent on binding of ATP.

The protein resides in the cytoplasm. In terms of biological role, ATPase subunit of a proteasome-like degradation complex; this subunit has chaperone activity. The binding of ATP and its subsequent hydrolysis by HslU are essential for unfolding of protein substrates subsequently hydrolyzed by HslV. HslU recognizes the N-terminal part of its protein substrates and unfolds these before they are guided to HslV for hydrolysis. The sequence is that of ATP-dependent protease ATPase subunit HslU from Photorhabdus laumondii subsp. laumondii (strain DSM 15139 / CIP 105565 / TT01) (Photorhabdus luminescens subsp. laumondii).